Consider the following 250-residue polypeptide: 3-deoxy-manno-octulosonate cytidylyltransferase (250 aa).

This sequence belongs to the KdsB family.

The protein localises to the cytoplasm. It catalyses the reaction 3-deoxy-alpha-D-manno-oct-2-ulosonate + CTP = CMP-3-deoxy-beta-D-manno-octulosonate + diphosphate. The protein operates within nucleotide-sugar biosynthesis; CMP-3-deoxy-D-manno-octulosonate biosynthesis; CMP-3-deoxy-D-manno-octulosonate from 3-deoxy-D-manno-octulosonate and CTP: step 1/1. It participates in bacterial outer membrane biogenesis; lipopolysaccharide biosynthesis. Activates KDO (a required 8-carbon sugar) for incorporation into bacterial lipopolysaccharide in Gram-negative bacteria. The sequence is that of 3-deoxy-manno-octulosonate cytidylyltransferase from Pectobacterium carotovorum subsp. carotovorum (strain PC1).